Here is a 513-residue protein sequence, read N- to C-terminus: ATP synthase subunit alpha 2 (513 aa).

169 to 176 serves as a coordination point for ATP; it reads GDRQTGKT.

The protein belongs to the ATPase alpha/beta chains family. In terms of assembly, F-type ATPases have 2 components, CF(1) - the catalytic core - and CF(0) - the membrane proton channel. CF(1) has five subunits: alpha(3), beta(3), gamma(1), delta(1), epsilon(1). CF(0) has three main subunits: a(1), b(2) and c(9-12). The alpha and beta chains form an alternating ring which encloses part of the gamma chain. CF(1) is attached to CF(0) by a central stalk formed by the gamma and epsilon chains, while a peripheral stalk is formed by the delta and b chains.

The protein localises to the cell inner membrane. The enzyme catalyses ATP + H2O + 4 H(+)(in) = ADP + phosphate + 5 H(+)(out). Functionally, produces ATP from ADP in the presence of a proton gradient across the membrane. The alpha chain is a regulatory subunit. The polypeptide is ATP synthase subunit alpha 2 (Photobacterium profundum (strain SS9)).